The following is a 63-amino-acid chain: Cecropin-2 (63 aa).

An N-terminal signal peptide occupies residues 1–21; the sequence is MNFNKVLVLLAVIFAVFAGQT. A propeptide spanning residues 22–23 is cleaved from the precursor; the sequence is EA. Position 62 is a lysine amide (K62).

This sequence belongs to the cecropin family.

It is found in the secreted. Functionally, cecropins have lytic and antibacterial activity against several Gram-positive and Gram-negative bacteria. This chain is Cecropin-2 (CEC2), found in Ceratitis capitata (Mediterranean fruit fly).